The chain runs to 364 residues: S-adenosylmethionine:tRNA ribosyltransferase-isomerase (364 aa).

It belongs to the QueA family. As to quaternary structure, monomer.

The protein resides in the cytoplasm. The catalysed reaction is 7-aminomethyl-7-carbaguanosine(34) in tRNA + S-adenosyl-L-methionine = epoxyqueuosine(34) in tRNA + adenine + L-methionine + 2 H(+). The protein operates within tRNA modification; tRNA-queuosine biosynthesis. In terms of biological role, transfers and isomerizes the ribose moiety from AdoMet to the 7-aminomethyl group of 7-deazaguanine (preQ1-tRNA) to give epoxyqueuosine (oQ-tRNA). This Bradyrhizobium sp. (strain BTAi1 / ATCC BAA-1182) protein is S-adenosylmethionine:tRNA ribosyltransferase-isomerase.